Consider the following 351-residue polypeptide: Histidine protein kinase SaeS (351 aa).

A run of 2 helical transmembrane segments spans residues 9-29 (IIIGVVSSILLTSTILAIAYI) and 40-60 (TLTLTTIITSCLTLLICSIFI). The region spanning 61 to 114 (NPLIQKIKQFNIKTKQFANGNYASNDKTFNSPKEIYELNQSFNKMASEITQQMN) is the HAMP domain. The Histidine kinase domain occupies 129 to 348 (NLAHDLKTPL…TMTVTLHKLD (220 aa)). Position 132 is a phosphohistidine; by autocatalysis (H132).

In terms of processing, autophosphorylated.

The protein resides in the cell membrane. It carries out the reaction ATP + protein L-histidine = ADP + protein N-phospho-L-histidine.. Its function is as follows. Member of the two-component regulatory system SaeR/SaeS involved in the regulation of staphylococcal virulence factors in a strain-dependent fashion. Probably functions as a membrane-associated protein kinase that upon sensing the appropriate signal, autophosphorylates and in turn activates the cytosolic response regulator SaeR. The polypeptide is Histidine protein kinase SaeS (saeS) (Staphylococcus aureus (strain bovine RF122 / ET3-1)).